Reading from the N-terminus, the 229-residue chain is Adapter protein MecA (229 aa).

The protein belongs to the MecA family. In terms of assembly, homodimer.

Its function is as follows. Enables the recognition and targeting of unfolded and aggregated proteins to the ClpC protease or to other proteins involved in proteolysis. In Latilactobacillus sakei subsp. sakei (strain 23K) (Lactobacillus sakei subsp. sakei), this protein is Adapter protein MecA.